We begin with the raw amino-acid sequence, 315 residues long: Methenyltetrahydromethanopterin cyclohydrolase (315 aa).

Belongs to the MCH family.

The protein resides in the cytoplasm. The enzyme catalyses 5,10-methenyl-5,6,7,8-tetrahydromethanopterin + H2O = N(5)-formyl-5,6,7,8-tetrahydromethanopterin + H(+). It functions in the pathway one-carbon metabolism; methanogenesis from CO(2); 5,10-methenyl-5,6,7,8-tetrahydromethanopterin from CO(2): step 3/3. Catalyzes the reversible interconversion of 5-formyl-H(4)MPT to methenyl-H(4)MPT(+). This Methanospirillum hungatei JF-1 (strain ATCC 27890 / DSM 864 / NBRC 100397 / JF-1) protein is Methenyltetrahydromethanopterin cyclohydrolase.